We begin with the raw amino-acid sequence, 53 residues long: Conotoxin Cal22e (53 aa).

The propeptide occupies 1 to 5 (GRPSA).

Contains 4 disulfide bonds. In terms of tissue distribution, expressed by the venom duct.

Its subcellular location is the secreted. Functionally, probable neurotoxin with unknown target. Possibly targets ion channels. The sequence is that of Conotoxin Cal22e from Californiconus californicus (California cone).